The chain runs to 484 residues: Protein nucleotidyltransferase YdiU (484 aa).

Residues G87, G89, R90, K110, D122, G123, R173, and R180 each coordinate ATP. The active-site Proton acceptor is D249. Residues N250 and D259 each coordinate Mg(2+). D259 contacts ATP. The interval 463–484 (EQEKYAELPPPSDRPYRTFCGT) is disordered.

The protein belongs to the SELO family. Mg(2+) is required as a cofactor. Requires Mn(2+) as cofactor.

It carries out the reaction L-seryl-[protein] + ATP = 3-O-(5'-adenylyl)-L-seryl-[protein] + diphosphate. The catalysed reaction is L-threonyl-[protein] + ATP = 3-O-(5'-adenylyl)-L-threonyl-[protein] + diphosphate. It catalyses the reaction L-tyrosyl-[protein] + ATP = O-(5'-adenylyl)-L-tyrosyl-[protein] + diphosphate. The enzyme catalyses L-histidyl-[protein] + UTP = N(tele)-(5'-uridylyl)-L-histidyl-[protein] + diphosphate. It carries out the reaction L-seryl-[protein] + UTP = O-(5'-uridylyl)-L-seryl-[protein] + diphosphate. The catalysed reaction is L-tyrosyl-[protein] + UTP = O-(5'-uridylyl)-L-tyrosyl-[protein] + diphosphate. Nucleotidyltransferase involved in the post-translational modification of proteins. It can catalyze the addition of adenosine monophosphate (AMP) or uridine monophosphate (UMP) to a protein, resulting in modifications known as AMPylation and UMPylation. The sequence is that of Protein nucleotidyltransferase YdiU from Geobacillus kaustophilus (strain HTA426).